The primary structure comprises 302 residues: tRNA pseudouridine synthase B (302 aa).

The Nucleophile role is filled by D43.

The protein belongs to the pseudouridine synthase TruB family. Type 1 subfamily.

The enzyme catalyses uridine(55) in tRNA = pseudouridine(55) in tRNA. Responsible for synthesis of pseudouridine from uracil-55 in the psi GC loop of transfer RNAs. The chain is tRNA pseudouridine synthase B from Burkholderia mallei (strain NCTC 10247).